A 1380-amino-acid polypeptide reads, in one-letter code: Inverted formin-2 (1380 aa).

The 330-residue stretch at 1–330 (MSLKEGAHTK…RAVLLADDCQ (330 aa)) folds into the GBD/FH3 domain. 2 disordered regions span residues 341-391 (LVTS…SGIP) and 440-541 (ISTS…PPPL). Positions 343–352 (TSKKHPSKEK) are enriched in basic residues. Residues 367–385 (QTDKPKDESCEEKTVKKDP) show a composition bias toward basic and acidic residues. In terms of domain architecture, FH1 spans 432 to 592 (VVSNAIDRIS…DYSLGYLPKA (161 aa)). Composition is skewed to pro residues over residues 446-470 (LPPPLPPPLPGTELSLPPPPPPPLP) and 478-541 (TPPP…PPPL). One can recognise an FH2 domain in the interval 593 to 981 (YFKVNKPTLK…AEKRKKQLAD (389 aa)). Coiled-coil stretches lie at residues 879–930 (LKKL…KLAD) and 956–991 (LKAKKDNKDRKEQAVKAEKRKKQLADEEAKRQKGEN). Residues 1009-1024 (DALLADIKKGFQLRKT) form the WH2 domain. Disordered stretches follow at residues 1026–1049 (KTKTEADSCPKPVSSETTGTDGTD), 1188–1244 (HKER…LSEA), and 1260–1380 (FQSS…CVVQ). 3 stretches are compositionally biased toward polar residues: residues 1206 to 1244 (GTESSSNQNNALNEGSQQHHNNTANESLQQAQNSALSEA), 1260 to 1284 (FQSSALNADSQPSHTSVVGSAQAQR), and 1294 to 1303 (TRDTTVTEGS). Positions 1306–1322 (EEDKCNDEGYPEHKTMG) are enriched in basic and acidic residues. A compositionally biased stretch (low complexity) spans 1328 to 1339 (SSSHSTTLQQSS). Residues 1345–1359 (VKRGSSKHKKKRRSS) show a composition bias toward basic residues.

It belongs to the formin homology family.

This is Inverted formin-2 (inf2) from Xenopus tropicalis (Western clawed frog).